We begin with the raw amino-acid sequence, 572 residues long: Proline--tRNA ligase (572 aa).

It belongs to the class-II aminoacyl-tRNA synthetase family. ProS type 1 subfamily. As to quaternary structure, homodimer.

The protein resides in the cytoplasm. The catalysed reaction is tRNA(Pro) + L-proline + ATP = L-prolyl-tRNA(Pro) + AMP + diphosphate. Functionally, catalyzes the attachment of proline to tRNA(Pro) in a two-step reaction: proline is first activated by ATP to form Pro-AMP and then transferred to the acceptor end of tRNA(Pro). As ProRS can inadvertently accommodate and process non-cognate amino acids such as alanine and cysteine, to avoid such errors it has two additional distinct editing activities against alanine. One activity is designated as 'pretransfer' editing and involves the tRNA(Pro)-independent hydrolysis of activated Ala-AMP. The other activity is designated 'posttransfer' editing and involves deacylation of mischarged Ala-tRNA(Pro). The misacylated Cys-tRNA(Pro) is not edited by ProRS. The chain is Proline--tRNA ligase from Pectobacterium atrosepticum (strain SCRI 1043 / ATCC BAA-672) (Erwinia carotovora subsp. atroseptica).